Consider the following 101-residue polypeptide: Integration host factor subunit beta (101 aa).

Residues 57–101 form a disordered region; it reads PARAGRNPRTGAHVPVDQKSVPFFKTGKEMRERLNRDHPDPGAAD. The segment covering 82–101 has biased composition (basic and acidic residues); it reads TGKEMRERLNRDHPDPGAAD.

This sequence belongs to the bacterial histone-like protein family. In terms of assembly, heterodimer of an alpha and a beta chain.

In terms of biological role, this protein is one of the two subunits of integration host factor, a specific DNA-binding protein that functions in genetic recombination as well as in transcriptional and translational control. The protein is Integration host factor subunit beta of Bradyrhizobium diazoefficiens (strain JCM 10833 / BCRC 13528 / IAM 13628 / NBRC 14792 / USDA 110).